A 446-amino-acid chain; its full sequence is Exodeoxyribonuclease 7 large subunit (446 aa).

Belongs to the XseA family. In terms of assembly, heterooligomer composed of large and small subunits.

It is found in the cytoplasm. It catalyses the reaction Exonucleolytic cleavage in either 5'- to 3'- or 3'- to 5'-direction to yield nucleoside 5'-phosphates.. Functionally, bidirectionally degrades single-stranded DNA into large acid-insoluble oligonucleotides, which are then degraded further into small acid-soluble oligonucleotides. The chain is Exodeoxyribonuclease 7 large subunit from Staphylococcus carnosus (strain TM300).